Consider the following 417-residue polypeptide: Serine/threonine transporter SstT (417 aa).

8 consecutive transmembrane segments (helical) span residues 21 to 41 (ILAG…VAKM), 49 to 69 (FISA…MASI), 83 to 103 (ILVL…VASF), 142 to 162 (ALIN…GLAL), 193 to 213 (IGIF…ALAG), 218 to 238 (LLVL…LIVF), 291 to 311 (IPLG…ILTL), and 331 to 351 (LVAA…LLLI).

The protein belongs to the dicarboxylate/amino acid:cation symporter (DAACS) (TC 2.A.23) family.

Its subcellular location is the cell inner membrane. The catalysed reaction is L-serine(in) + Na(+)(in) = L-serine(out) + Na(+)(out). It carries out the reaction L-threonine(in) + Na(+)(in) = L-threonine(out) + Na(+)(out). Functionally, involved in the import of serine and threonine into the cell, with the concomitant import of sodium (symport system). This is Serine/threonine transporter SstT from Proteus mirabilis (strain HI4320).